The sequence spans 244 residues: CTD nuclear envelope phosphatase 1 (244 aa).

A helical transmembrane segment spans residues 7–29 (LLGLRGFVAFAAKLWSFVLYLLR). One can recognise an FCP1 homology domain in the interval 57 to 224 (SQVKRKVLVL…LNLLPMLDAL (168 aa)).

Belongs to the dullard family. Interacts with bmpr1a, bmpr1b and bmpr2.

Its subcellular location is the membrane. The protein resides in the cytoplasm. It is found in the perinuclear region. The catalysed reaction is O-phospho-L-seryl-[protein] + H2O = L-seryl-[protein] + phosphate. It carries out the reaction O-phospho-L-threonyl-[protein] + H2O = L-threonyl-[protein] + phosphate. Its function is as follows. Serine/threonine protein phosphatase that may dephosphorylate and activate lipins. Lipins are phosphatidate phosphatases that catalyze the conversion of phosphatidic acid to diacylglycerol and control the metabolism of fatty acids at different levels. May indirectly modulate the lipid composition of nuclear and/or endoplasmic reticulum membranes and be required for proper nuclear membrane morphology and/or dynamics. May also indirectly regulate the production of lipid droplets and triacylglycerol. Induces neuronal differentiation by antagonizing BMP signaling. Acts both by dephosphorylating BMPR1A and by promoting BMPR2 proteasomal degradation. The polypeptide is CTD nuclear envelope phosphatase 1 (ctdnep1) (Xenopus tropicalis (Western clawed frog)).